The primary structure comprises 511 residues: Aldehyde dehydrogenase 2, mitochondrial (511 aa).

A mitochondrion-targeting transit peptide spans 1–21; that stretch reads MSKSKTKTDKRNQSSLSRIKL. The tract at residues 72–92 is disordered; the sequence is VSEKSQHDSTEEDITQVSEKS. Position 274–279 (274–279) interacts with NAD(+); it reads GSTLVG. The active-site Proton acceptor is the Glu297. The active-site Nucleophile is the Cys331.

It belongs to the aldehyde dehydrogenase family.

Its subcellular location is the mitochondrion matrix. It catalyses the reaction an aldehyde + NAD(+) + H2O = a carboxylate + NADH + 2 H(+). The protein operates within alcohol metabolism; ethanol degradation; acetate from ethanol: step 2/2. This chain is Aldehyde dehydrogenase 2, mitochondrial (ALD2), found in Saccharomyces cerevisiae (Baker's yeast).